The primary structure comprises 124 residues: Small ribosomal subunit protein uS12 (124 aa).

Asp89 is modified (3-methylthioaspartic acid). The segment at Gln105–Ser124 is disordered. Residues Lys108 to Gly118 show a composition bias toward basic residues.

This sequence belongs to the universal ribosomal protein uS12 family. Part of the 30S ribosomal subunit. Contacts proteins S8 and S17. May interact with IF1 in the 30S initiation complex.

Its function is as follows. With S4 and S5 plays an important role in translational accuracy. In terms of biological role, interacts with and stabilizes bases of the 16S rRNA that are involved in tRNA selection in the A site and with the mRNA backbone. Located at the interface of the 30S and 50S subunits, it traverses the body of the 30S subunit contacting proteins on the other side and probably holding the rRNA structure together. The combined cluster of proteins S8, S12 and S17 appears to hold together the shoulder and platform of the 30S subunit. The protein is Small ribosomal subunit protein uS12 of Mycobacterium avium (strain 104).